The chain runs to 558 residues: Zinc finger protein piragua (558 aa).

Positions 15-94 (STCRLCHHNT…QEREQSLQEQ (80 aa)) constitute a ZAD domain. 4 residues coordinate Zn(2+): C17, C20, C67, and C70. Acidic residues predominate over residues 132–177 (LAESSEEEFALGSDGEYENYDDDDEEEEEDYDEEDEEDGQNGEDVD). The segment at 132-178 (LAESSEEEFALGSDGEYENYDDDDEEEEEDYDEEDEEDGQNGEDVDM) is disordered. C2H2-type zinc fingers lie at residues 208 to 231 (FLCQ…LAAH), 237 to 260 (YCCN…KTLH), 266 to 288 (YVCA…TIVH), 294 to 316 (FTCN…MRIH), 322 to 344 (FVCQ…TRSH), 350 to 372 (FQCG…QQVH), 414 to 436 (YHCD…QALH), 441 to 464 (FACK…LEAH), and 468 to 490 (FTCG…LKVH).

Functionally, may be involved in transcriptional regulation. The function of this protein is unclear. According to one report, it is required for development and viability since mutants display defects in several developmental morphogenetic processes including dorsal closure and head involution, and die by the first instar larval stage. It may also be involved in fwe-mediated cellular competition. However, according to another report, it is not required for development or viability since mutants have no visible phenotype and are fertile. The sequence is that of Zinc finger protein piragua from Drosophila melanogaster (Fruit fly).